A 393-amino-acid chain; its full sequence is MGYYSLTEVTAVQYAKEHGYFEKKANVVCHEIGDGNLNYVFKLDDGVKSIIIKQALPYAKVVGESWPLSIKRATIESKALQIFAKYVPEYVPVVYSHDEELAVTVIEDLSRLTITRKGLIDGEEYPLLSQHIGRFLANVLFYTSDFGLQSEEKRVLEGTFVNPDLCKITEDLVFTDPFGHYDTNDYESELQLAVDELWSDKILKLKVAQYKYKFLTRKEALIHGDLHTGSIFSSPSETKVIDPEFATYGPFGFDIGQFIANLLLNALSREEEQRGVLFFHIEKTWSYFVETFTKLWIGEGVEAYTKEKQWLPIILQNIFTDAVGFAGCELIRRTIGLAHVADLEEITNKETRIQAKKQAISLGKELIKYESKNADIQLFRTLFQQTVSGGIKA.

ATP contacts are provided by residues asparagine 38, lysine 53, and 107-109 (EDL). Aspartate 225 serves as a coordination point for substrate. 242-244 (DPE) contacts ATP. Arginine 332 is a substrate binding site.

The protein belongs to the methylthioribose kinase family. In terms of assembly, homodimer.

It carries out the reaction 5-(methylsulfanyl)-D-ribose + ATP = 5-(methylsulfanyl)-alpha-D-ribose 1-phosphate + ADP + H(+). The protein operates within amino-acid biosynthesis; L-methionine biosynthesis via salvage pathway; S-methyl-5-thio-alpha-D-ribose 1-phosphate from S-methyl-5'-thioadenosine (hydrolase route): step 2/2. In terms of biological role, catalyzes the phosphorylation of methylthioribose into methylthioribose-1-phosphate. This is Methylthioribose kinase from Bacillus thuringiensis subsp. konkukian (strain 97-27).